Here is a 570-residue protein sequence, read N- to C-terminus: Probable glucomannan 4-beta-mannosyltransferase 11 (570 aa).

Residues 57 to 77 (LAMTVMILAEKLFVAAVCLAV) traverse the membrane as a helical segment. The active site involves D157. Substrate contacts are provided by D216 and D218. D310 is a catalytic residue. Transmembrane regions (helical) follow at residues 389-409 (IAAH…SVWL), 412-432 (IEIP…CKAV), 522-542 (YSEI…VLYA), and 548-568 (IFLF…IGVC).

It belongs to the glycosyltransferase 2 family. Plant cellulose synthase-like A subfamily.

The protein localises to the golgi apparatus membrane. It catalyses the reaction GDP-mannose + (glucomannan)n = GDP + (glucomannan)n+1.. Functionally, probable mannan synthase which consists of a 4-beta-mannosyltransferase activity on mannan using GDP-mannose. The beta-1,4-mannan product is the backbone for galactomannan synthesis by galactomannan galactosyltransferase. Galactomannan is a noncellulosic polysaccharides of plant cell wall. In Oryza sativa subsp. japonica (Rice), this protein is Probable glucomannan 4-beta-mannosyltransferase 11.